The sequence spans 91 residues: Putative ribonuclease inhibitor YrdF (91 aa).

It belongs to the barstar family.

The protein resides in the cytoplasm. In Bacillus subtilis (strain 168), this protein is Putative ribonuclease inhibitor YrdF (yrdF).